Consider the following 343-residue polypeptide: tRNA N6-adenosine threonylcarbamoyltransferase (343 aa).

2 residues coordinate Fe cation: His111 and His115. Substrate-binding positions include 134–138, Asp167, Gly180, and Asn276; that span reads LVSGG. Position 304 (Asp304) interacts with Fe cation.

It belongs to the KAE1 / TsaD family. Fe(2+) serves as cofactor.

It localises to the cytoplasm. The enzyme catalyses L-threonylcarbamoyladenylate + adenosine(37) in tRNA = N(6)-L-threonylcarbamoyladenosine(37) in tRNA + AMP + H(+). Its function is as follows. Required for the formation of a threonylcarbamoyl group on adenosine at position 37 (t(6)A37) in tRNAs that read codons beginning with adenine. Is involved in the transfer of the threonylcarbamoyl moiety of threonylcarbamoyl-AMP (TC-AMP) to the N6 group of A37, together with TsaE and TsaB. TsaD likely plays a direct catalytic role in this reaction. In Hahella chejuensis (strain KCTC 2396), this protein is tRNA N6-adenosine threonylcarbamoyltransferase.